We begin with the raw amino-acid sequence, 658 residues long: UvrABC system protein B (658 aa).

The 154-residue stretch at 25 to 178 folds into the Helicase ATP-binding domain; sequence KSLKNNNHYQ…KNFLLKLVEM (154 aa). An ATP-binding site is contributed by 38-45; that stretch reads GVTGSGKT. The Beta-hairpin motif lies at 91–114; it reads HFDYYQPESYIPRRDLFIEKDSSI. Positions 433–607 constitute a Helicase C-terminal domain; the sequence is QVQDLFDEIK…ELKLRDDEIR (175 aa). The UVR domain occupies 623–658; sequence EKIIKELDKKMRECAKNLDFEEAMRLRDEIAKLRTL.

The protein belongs to the UvrB family. As to quaternary structure, forms a heterotetramer with UvrA during the search for lesions. Interacts with UvrC in an incision complex.

The protein localises to the cytoplasm. In terms of biological role, the UvrABC repair system catalyzes the recognition and processing of DNA lesions. A damage recognition complex composed of 2 UvrA and 2 UvrB subunits scans DNA for abnormalities. Upon binding of the UvrA(2)B(2) complex to a putative damaged site, the DNA wraps around one UvrB monomer. DNA wrap is dependent on ATP binding by UvrB and probably causes local melting of the DNA helix, facilitating insertion of UvrB beta-hairpin between the DNA strands. Then UvrB probes one DNA strand for the presence of a lesion. If a lesion is found the UvrA subunits dissociate and the UvrB-DNA preincision complex is formed. This complex is subsequently bound by UvrC and the second UvrB is released. If no lesion is found, the DNA wraps around the other UvrB subunit that will check the other stand for damage. This chain is UvrABC system protein B, found in Helicobacter pylori (strain HPAG1).